Here is a 140-residue protein sequence, read N- to C-terminus: Ribosomal RNA large subunit methyltransferase H (140 aa).

Positions 55 and 87 each coordinate S-adenosyl-L-methionine.

This sequence belongs to the RNA methyltransferase RlmH family. In terms of assembly, homodimer.

The protein resides in the cytoplasm. It catalyses the reaction pseudouridine(1915) in 23S rRNA + S-adenosyl-L-methionine = N(3)-methylpseudouridine(1915) in 23S rRNA + S-adenosyl-L-homocysteine + H(+). In terms of biological role, specifically methylates the pseudouridine at position 1915 (m3Psi1915) in 23S rRNA. The chain is Ribosomal RNA large subunit methyltransferase H from Rhizorhabdus wittichii (strain DSM 6014 / CCUG 31198 / JCM 15750 / NBRC 105917 / EY 4224 / RW1) (Sphingomonas wittichii).